Here is a 434-residue protein sequence, read N- to C-terminus: Xylose isomerase (434 aa).

Residues H99 and D102 contribute to the active site. Mg(2+) contacts are provided by E230, E266, H269, D294, D305, D307, and D337.

This sequence belongs to the xylose isomerase family. Homotetramer. Mg(2+) is required as a cofactor.

It localises to the cytoplasm. The catalysed reaction is alpha-D-xylose = alpha-D-xylulofuranose. This is Xylose isomerase from Dinoroseobacter shibae (strain DSM 16493 / NCIMB 14021 / DFL 12).